A 935-amino-acid chain; its full sequence is Kinesin heavy chain (935 aa).

Residues 5–329 (NIKVVCRFRP…LRFGARAKSI (325 aa)) enclose the Kinesin motor domain. ATP-binding positions include 87-94 (GQTGSGKT) and 237-244 (GSEKVGKT). Residues 342–887 (AELKALLKKV…SQKSQNSLAA (546 aa)) are a coiled coil. Disordered regions lie at residues 400 to 419 (APGF…TPVP) and 898 to 935 (RGNG…MNSR).

It belongs to the TRAFAC class myosin-kinesin ATPase superfamily. Kinesin family. Kinesin subfamily.

It localises to the cytoplasm. Its subcellular location is the cytoskeleton. Its function is as follows. Kinesin is a microtubule-associated force-producing protein that may play a role in organelle transport. Its motor activity is directed toward the microtubule's plus end. The speed of this motor is 4-5 times faster than its animal counterparts. This Syncephalastrum racemosum (Filamentous fungus) protein is Kinesin heavy chain.